The sequence spans 77 residues: Large ribosomal subunit protein uL29 (77 aa).

It belongs to the universal ribosomal protein uL29 family.

The protein is Large ribosomal subunit protein uL29 of Methanopyrus kandleri (strain AV19 / DSM 6324 / JCM 9639 / NBRC 100938).